The sequence spans 363 residues: MARFWTEAPHRHGSTARTGILLVNLGTPVAPTAAALRPYLQQFLSDPRVVEIPRAVWLPLLNGVILNTRPRKSAAKYASIWTDEGSPLAVHTRRQAELIAARFASRDDVRVDWAMRYGAPAVADKLGALRAAGCTRILVVPMYPQYAASTTASVMDEVARCLQHWRNLPELRFVRSFHDDPGYIGALAASVREHWTRHGQPDRLLMSFHGLPRYTLERGDPYHCECHRTARLLAESLGLAPERVIVSFQSRFGRTRWLEPYTQPTLEALARDGVGRVDVMCPGFVADCLETLEEIAMECRAAFLGAGGREFHYIPCLNERPDWIDALERRVRSEAGNWLTATPPTDAEREAARGRALALGAAE.

Residues His209 and Glu290 each coordinate Fe cation.

This sequence belongs to the ferrochelatase family.

It localises to the cytoplasm. It carries out the reaction heme b + 2 H(+) = protoporphyrin IX + Fe(2+). It participates in porphyrin-containing compound metabolism; protoheme biosynthesis; protoheme from protoporphyrin-IX: step 1/1. Functionally, catalyzes the ferrous insertion into protoporphyrin IX. The protein is Ferrochelatase of Azoarcus sp. (strain BH72).